The chain runs to 480 residues: Glutamate--tRNA ligase (480 aa).

A 'HIGH' region motif is present at residues 21–31; the sequence is PSPTGYLHVGG. Zn(2+) is bound by residues Cys110, Cys112, Cys137, and His139. The short motif at 248 to 252 is the 'KMSKS' region element; it reads KLSKR. An ATP-binding site is contributed by Lys251.

It belongs to the class-I aminoacyl-tRNA synthetase family. Glutamate--tRNA ligase type 1 subfamily. Monomer. Zn(2+) serves as cofactor.

The protein localises to the cytoplasm. The enzyme catalyses tRNA(Glu) + L-glutamate + ATP = L-glutamyl-tRNA(Glu) + AMP + diphosphate. In terms of biological role, catalyzes the attachment of glutamate to tRNA(Glu) in a two-step reaction: glutamate is first activated by ATP to form Glu-AMP and then transferred to the acceptor end of tRNA(Glu). The sequence is that of Glutamate--tRNA ligase from Haemophilus influenzae (strain PittEE).